A 438-amino-acid polypeptide reads, in one-letter code: Enolase (438 aa).

2 residues coordinate substrate: H159 and E168. Catalysis depends on E211, which acts as the Proton donor. 3 residues coordinate Mg(2+): D246, E297, and D322. Substrate-binding residues include E297 and D322. The Proton acceptor role is filled by K347. Substrate contacts are provided by residues 374–377 (SHRS) and K398.

This sequence belongs to the enolase family. As to quaternary structure, homodimer. Mg(2+) serves as cofactor.

The protein resides in the cytoplasm. It carries out the reaction (2R)-2-phosphoglycerate = phosphoenolpyruvate + H2O. It functions in the pathway carbohydrate degradation; glycolysis; pyruvate from D-glyceraldehyde 3-phosphate: step 4/5. This Penicillium chrysogenum (Penicillium notatum) protein is Enolase (enoA).